Here is a 588-residue protein sequence, read N- to C-terminus: Outer membrane transporter CdiB (588 aa).

A helical membrane pass occupies residues 33–55 (VVRYFSLLPCLCILSFSSPAAML). The POTRA domain occupies 104–179 (FTVSRIVVSG…GVLHITVMEG (76 aa)).

The protein belongs to the TPS (TC 1.B.20) family.

The protein localises to the cell outer membrane. Its function is as follows. Potential outer membrane protein component of a toxin-immunity protein module, which functions as a cellular contact-dependent growth inhibition (CDI) system. CDI modules allow bacteria to communicate with and inhibit the growth of closely related neighboring bacteria in a contact-dependent fashion. This protein may be required for secretion and assembly of the CdiA toxin protein. Probable member of a two partner secretion pathway (TPS) in which it mediates the secretion of CdiA. The polypeptide is Outer membrane transporter CdiB (Escherichia coli O6:K15:H31 (strain 536 / UPEC)).